The primary structure comprises 141 residues: Nucleoside diphosphate kinase (141 aa).

The ATP site is built by K11, F59, R87, T93, R104, and N114. The Pros-phosphohistidine intermediate role is filled by H117.

It belongs to the NDK family. In terms of assembly, homotetramer. It depends on Mg(2+) as a cofactor.

It localises to the cytoplasm. It carries out the reaction a 2'-deoxyribonucleoside 5'-diphosphate + ATP = a 2'-deoxyribonucleoside 5'-triphosphate + ADP. The catalysed reaction is a ribonucleoside 5'-diphosphate + ATP = a ribonucleoside 5'-triphosphate + ADP. In terms of biological role, major role in the synthesis of nucleoside triphosphates other than ATP. The ATP gamma phosphate is transferred to the NDP beta phosphate via a ping-pong mechanism, using a phosphorylated active-site intermediate. This is Nucleoside diphosphate kinase from Methylibium petroleiphilum (strain ATCC BAA-1232 / LMG 22953 / PM1).